The sequence spans 617 residues: Glutamyl-tRNA(Gln) amidotransferase subunit B, mitochondrial (617 aa).

The transit peptide at 1–56 (MPRIPTSVLGKYLLSGQISRQGCVGARQITRHSALPSAAVSVANSARLLHVSSETV) directs the protein to the mitochondrion. The disordered stretch occupies residues 53-90 (SETVPPPPAQPVPLRKQLKDEAKKAKKQGKKKSKGDSQ). Over residues 76 to 85 (KAKKQGKKKS) the composition is skewed to basic residues.

Belongs to the GatB/GatE family. GatB subfamily. As to quaternary structure, subunit of the heterotrimeric GatCAB amidotransferase (AdT) complex, composed of A, B and C subunits.

Its subcellular location is the mitochondrion. It carries out the reaction L-glutamyl-tRNA(Gln) + L-glutamine + ATP + H2O = L-glutaminyl-tRNA(Gln) + L-glutamate + ADP + phosphate + H(+). Functionally, allows the formation of correctly charged Gln-tRNA(Gln) through the transamidation of misacylated Glu-tRNA(Gln) in the mitochondria. The reaction takes place in the presence of glutamine and ATP through an activated gamma-phospho-Glu-tRNA(Gln). The protein is Glutamyl-tRNA(Gln) amidotransferase subunit B, mitochondrial of Fusarium vanettenii (strain ATCC MYA-4622 / CBS 123669 / FGSC 9596 / NRRL 45880 / 77-13-4) (Fusarium solani subsp. pisi).